The sequence spans 424 residues: Interleukin-13 receptor subunit alpha-1 (424 aa).

Residues 1–25 (MARPALLGELLVLLLWTATVGQVAA) form the signal peptide. The Extracellular portion of the chain corresponds to 26-340 (ATEVQPPVTN…QSIGKEQNST (315 aa)). In terms of domain architecture, Fibronectin type-III 1 spans 32 to 121 (PVTNLSVSVE…VKKCISPPEG (90 aa)). Residues N35, N59, N103, and N136 are each glycosylated (N-linked (GlcNAc...) asparagine). Cysteines 44 and 93 form a disulfide. Intrachain disulfides connect C132–C142 and C171–C183. Positions 224-336 (KPDPPHIKHL…WSEAQSIGKE (113 aa)) constitute a Fibronectin type-III 2 domain. N-linked (GlcNAc...) asparagine glycosylation is present at N262. The WSXWS motif motif lies at 324–328 (WSDWS). N-linked (GlcNAc...) asparagine glycosylation occurs at N338. Residues 341–364 (FYTTMLLTIPVFVAVAVIILLFYL) traverse the membrane as a helical segment. Over 365-424 (KRLKIIIFPPIPDPGKIFKEMFGDQNDDTLHWKKYDIYEKQSKEETDSVVLIENLKKAAP) the chain is Cytoplasmic. A Box 1 motif motif is present at residues 371 to 379 (IFPPIPDPG).

It belongs to the type I cytokine receptor family. Type 5 subfamily. In terms of assembly, interleukin-13 receptor is a complex of IL4R, IL13RA1, and possibly other components. Interacts with TRAF3IP1. Interacts with IL4. As to expression, spleen, liver, thymus, heart, lung, kidney, testis, stomach, brain, skin, and colon; but not skeletal muscle.

Its subcellular location is the membrane. Its function is as follows. Binds with low affinity to interleukin-13 (IL13). Together with IL4RA can form a functional receptor for IL13. Also serves as an alternate accessory protein to the common cytokine receptor gamma chain for interleukin-4 (IL4) signaling, but cannot replace the function of IL2RG in allowing enhanced interleukin-2 (IL2) binding activity. The sequence is that of Interleukin-13 receptor subunit alpha-1 (Il13ra1) from Mus musculus (Mouse).